The following is a 686-amino-acid chain: Hexamerin 70c (686 aa).

Residues 1 to 19 form the signal peptide; that stretch reads MLSKVVLLVALAAICGAQG. Residues 32–155 enclose the Hemocyanin N-terminal domain; sequence FLHKQKKIFD…IAVLYRPDTK (124 aa). A Hemocyanin middle domain is found at 161–431; sequence AIYEIYPNYF…MLYQNILSYF (271 aa). 2 N-linked (GlcNAc...) asparagine glycosylation sites follow: Asn205 and Asn662. Residues 440 to 676 enclose the Hemocyanin C-terminal domain; it reads QYSQSELQMP…NMYFKDVFIY (237 aa).

The protein belongs to the hemocyanin/hexamerin family. Probable homohexamer. Expressed in the fat body and secreted into the hemolymph (at protein level). Present in trophocytes and oenocytes of the fat body (at protein level). Not expressed in ovary or testis.

It localises to the secreted. The protein localises to the nucleus. Its subcellular location is the cytoplasm. The protein resides in the cytoplasmic granule. Functionally, storage protein that may function as a nutrient supply to compensate for lack of dietary proteins during metamorphosis and egg production. The polypeptide is Hexamerin 70c (Apis mellifera (Honeybee)).